The primary structure comprises 362 residues: Protein RecA (362 aa).

77–84 (GPESSGKT) serves as a coordination point for ATP.

This sequence belongs to the RecA family.

It is found in the cytoplasm. Can catalyze the hydrolysis of ATP in the presence of single-stranded DNA, the ATP-dependent uptake of single-stranded DNA by duplex DNA, and the ATP-dependent hybridization of homologous single-stranded DNAs. It interacts with LexA causing its activation and leading to its autocatalytic cleavage. The protein is Protein RecA of Rhizobium leguminosarum bv. trifolii (strain WSM2304).